The following is an 89-amino-acid chain: Small ribosomal subunit protein uS15 (89 aa).

This sequence belongs to the universal ribosomal protein uS15 family. In terms of assembly, part of the 30S ribosomal subunit. Forms a bridge to the 50S subunit in the 70S ribosome, contacting the 23S rRNA.

In terms of biological role, one of the primary rRNA binding proteins, it binds directly to 16S rRNA where it helps nucleate assembly of the platform of the 30S subunit by binding and bridging several RNA helices of the 16S rRNA. Functionally, forms an intersubunit bridge (bridge B4) with the 23S rRNA of the 50S subunit in the ribosome. This chain is Small ribosomal subunit protein uS15, found in Staphylococcus aureus (strain JH1).